Consider the following 257-residue polypeptide: Major prion protein (257 aa).

Positions 1–24 (MVKSHIGGWILVLFVAAWSDIGLC) are cleaved as a signal peptide. The segment at 25 to 234 (KKRPKPGGGW…EYEAYAQRGA (210 aa)) is interaction with GRB2, ERI3 and SYN1. The disordered stretch occupies residues 28 to 113 (PKPGGGWNTG…NKPSKPKTNM (86 aa)). 5 consecutive repeat copies span residues 54-62 (PQGGGGWGQ), 63-70 (PHGGGWGQ), 71-78 (PHGGGWGQ), 79-86 (PHGGGWGQ), and 87-95 (PHGGGGWGQ). The tract at residues 54-95 (PQGGGGWGQPHGGGWGQPHGGGWGQPHGGGWGQPHGGGGWGQ) is 5 X 8 AA tandem repeats of P-H-G-G-G-W-G-Q. Residues 55–100 (QGGGGWGQPHGGGWGQPHGGGWGQPHGGGWGQPHGGGGWGQGGGSH) are compositionally biased toward gly residues. Cu(2+) contacts are provided by His-64, Gly-65, Gly-66, His-72, Gly-73, Gly-74, His-80, Gly-81, Gly-82, His-88, Gly-90, and Gly-91. The cysteines at positions 183 and 218 are disulfide-linked. Residues Asn-185 and Asn-201 are each glycosylated (N-linked (GlcNAc...) asparagine). The GPI-anchor amidated alanine moiety is linked to residue Ala-234. Residues 235 to 257 (SVILFSSPPVILLISFLLFLIVG) constitute a propeptide, removed in mature form.

It belongs to the prion family. As to quaternary structure, monomer and homodimer. Has a tendency to aggregate into amyloid fibrils containing a cross-beta spine, formed by a steric zipper of superposed beta-strands. Soluble oligomers may represent an intermediate stage on the path to fibril formation. Copper binding may promote oligomerization. Interacts with GRB2, APP, ERI3/PRNPIP and SYN1. Mislocalized cytosolically exposed PrP interacts with MGRN1; this interaction alters MGRN1 subcellular location and causes lysosomal enlargement. Interacts with KIAA1191.

The protein localises to the cell membrane. It is found in the golgi apparatus. Its function is as follows. Its primary physiological function is unclear. Has cytoprotective activity against internal or environmental stresses. May play a role in neuronal development and synaptic plasticity. May be required for neuronal myelin sheath maintenance. May play a role in iron uptake and iron homeostasis. Soluble oligomers are toxic to cultured neuroblastoma cells and induce apoptosis (in vitro). Association with GPC1 (via its heparan sulfate chains) targets PRNP to lipid rafts. Also provides Cu(2+) or Zn(2+) for the ascorbate-mediated GPC1 deaminase degradation of its heparan sulfate side chains. The sequence is that of Major prion protein (PRNP) from Sus scrofa (Pig).